A 174-amino-acid polypeptide reads, in one-letter code: MSKKQQAPVAQKPVGKQQQVNRKPQDRPGLTEDEIEEIKEAFNLFDTEGTGRVDPRELKAAMQSLGFDQKNPTIFNMIAELENEGTDIDFDQFLDAITSKLGNRESRDGINKIFDLFDDDGSNSINLNNLKRVSKELGETMTAEELAEMLERAASNGRDISREDFYNIMVKRTF.

The segment at 1-33 (MSKKQQAPVAQKPVGKQQQVNRKPQDRPGLTED) is disordered. 4 EF-hand domains span residues 33 to 68 (DEIE…LGFD), 88 to 103 (IDFD…KLGN), 105 to 140 (ESRD…LGET), and 141 to 174 (MTAE…KRTF).

This sequence belongs to the centrin family. As to quaternary structure, monomer.

It localises to the cytoplasm. The protein resides in the cytoskeleton. Functionally, plays a fundamental role in microtubule organizing center structure and function. Component of the infraciliary lattice (ICL) and the ciliary basal bodies. This is Caltractin ICL1e (Icl1e) from Paramecium tetraurelia.